A 207-amino-acid polypeptide reads, in one-letter code: MSERLLVLVRHGQSEWNLKNLFTGWKDPDLTELGVTEAKDAGRKLKEQGFAFDIAFTSVLIRAEHTLDLVLEELGQTGIPVRKDLALNERDYGDLAGLNKDEARKKWGEEQVLIWRRSYDVPPPGGESLKDTLARTLPYFVQEILPCVLRGECTLVAAHGNSLRALVMVLEKLSPEQILKRELATGAPVIYRLNADATVASKLDLAA.

Residues 10-17 (RHGQSEWN), 23-24 (TG), Arg-62, 89-92 (ERDY), Lys-100, 116-117 (RR), and 160-161 (GN) contribute to the substrate site. His-11 acts as the Tele-phosphohistidine intermediate in catalysis. The Proton donor/acceptor role is filled by Glu-89.

It belongs to the phosphoglycerate mutase family. BPG-dependent PGAM subfamily. As to quaternary structure, homodimer.

The enzyme catalyses (2R)-2-phosphoglycerate = (2R)-3-phosphoglycerate. Its pathway is carbohydrate degradation; glycolysis; pyruvate from D-glyceraldehyde 3-phosphate: step 3/5. In terms of biological role, catalyzes the interconversion of 2-phosphoglycerate and 3-phosphoglycerate. In Nitrobacter hamburgensis (strain DSM 10229 / NCIMB 13809 / X14), this protein is 2,3-bisphosphoglycerate-dependent phosphoglycerate mutase.